Here is a 1436-residue protein sequence, read N- to C-terminus: DNA-directed RNA polymerase subunit beta (1436 aa).

Belongs to the RNA polymerase beta chain family. In terms of assembly, the RNAP catalytic core consists of 2 alpha, 1 beta, 1 beta' and 1 omega subunit. When a sigma factor is associated with the core the holoenzyme is formed, which can initiate transcription.

The catalysed reaction is RNA(n) + a ribonucleoside 5'-triphosphate = RNA(n+1) + diphosphate. Functionally, DNA-dependent RNA polymerase catalyzes the transcription of DNA into RNA using the four ribonucleoside triphosphates as substrates. The chain is DNA-directed RNA polymerase subunit beta from Wolbachia pipientis.